The primary structure comprises 407 residues: Argininosuccinate synthase (407 aa).

Residues Ala-16–Ser-24 and Ala-44 contribute to the ATP site. Residues Tyr-96 and Ser-101 each coordinate L-citrulline. Gly-126 provides a ligand contact to ATP. The L-aspartate site is built by Thr-128, Asn-132, and Asp-133. An L-citrulline-binding site is contributed by Asn-132. 5 residues coordinate L-citrulline: Arg-136, Ser-185, Ser-194, Glu-270, and Tyr-282.

It belongs to the argininosuccinate synthase family. Type 1 subfamily. As to quaternary structure, homotetramer.

Its subcellular location is the cytoplasm. The catalysed reaction is L-citrulline + L-aspartate + ATP = 2-(N(omega)-L-arginino)succinate + AMP + diphosphate + H(+). Its pathway is amino-acid biosynthesis; L-arginine biosynthesis; L-arginine from L-ornithine and carbamoyl phosphate: step 2/3. This Shewanella denitrificans (strain OS217 / ATCC BAA-1090 / DSM 15013) protein is Argininosuccinate synthase.